Reading from the N-terminus, the 509-residue chain is Acetyl-coenzyme A carboxylase carboxyl transferase subunit beta, chloroplastic (509 aa).

The segment at 164-216 (HGSVCDGESHNSSEGESSSRRTHTKGVDLTIRESSNENERESSNENERKSSND) is disordered. Basic and acidic residues-rich tracts occupy residues 170-182 (GESH…ESSS) and 193-216 (TIRE…SSND). Positions 226–509 (LWLQCENCYG…LNQNSNQVEC (284 aa)) constitute a CoA carboxyltransferase N-terminal domain. Residues Cys230, Cys233, Cys249, and Cys252 each coordinate Zn(2+). A C4-type zinc finger spans residues 230–252 (CENCYGLNYKKFLKSKMNICEQC). The disordered stretch occupies residues 288–307 (FDSEGEQEQEQEQEQEEEET).

It belongs to the AccD/PCCB family. As to quaternary structure, acetyl-CoA carboxylase is a heterohexamer composed of biotin carboxyl carrier protein, biotin carboxylase and 2 subunits each of ACCase subunit alpha and ACCase plastid-coded subunit beta (accD). Zn(2+) serves as cofactor.

It is found in the plastid. The protein resides in the chloroplast stroma. It carries out the reaction N(6)-carboxybiotinyl-L-lysyl-[protein] + acetyl-CoA = N(6)-biotinyl-L-lysyl-[protein] + malonyl-CoA. Its pathway is lipid metabolism; malonyl-CoA biosynthesis; malonyl-CoA from acetyl-CoA: step 1/1. In terms of biological role, component of the acetyl coenzyme A carboxylase (ACC) complex. Biotin carboxylase (BC) catalyzes the carboxylation of biotin on its carrier protein (BCCP) and then the CO(2) group is transferred by the transcarboxylase to acetyl-CoA to form malonyl-CoA. This is Acetyl-coenzyme A carboxylase carboxyl transferase subunit beta, chloroplastic from Ipomoea purpurea (Common morning glory).